Reading from the N-terminus, the 198-residue chain is Probable GTP-binding protein EngB (198 aa).

The EngB-type G domain maps to 21–195 (NFSEVAFLGR…EDIIINQTLG (175 aa)). GTP is bound by residues 29–36 (GRSNVGKS), 56–60 (GKTQL), 81–84 (DLPG), 151–154 (TKCD), and 174–176 (VSN). Positions 36 and 58 each coordinate Mg(2+).

It belongs to the TRAFAC class TrmE-Era-EngA-EngB-Septin-like GTPase superfamily. EngB GTPase family. Requires Mg(2+) as cofactor.

Functionally, necessary for normal cell division and for the maintenance of normal septation. The polypeptide is Probable GTP-binding protein EngB (Campylobacter jejuni subsp. jejuni serotype O:23/36 (strain 81-176)).